The primary structure comprises 550 residues: MLKNINPTETQAWADLTAHFETAQDFNLSDLFAADAQRFDKFSATFGQDILVDFSKNLITEETMKKLFALAEQTELSSAITAMFSGEKINKTEGRSVLHTALRNRSNTPVMVDGEDVMPAVNAVLEKMKGFTERLISGEWKGYTGKEITDIVNIGIGGSDLGPYMVSEALAPYKTRLNMHFVSNVDGTHIVETLKPLNPETTLFLIASKTFTTQETMTNAHSARDWFLAEAGDQAHVAKHFAALSTNAQSVSEFGIDTDNMFEFWDWVGGRYSLWSAIGLSIALAVGFDNFIELLEGAHEVDKHFAETDLENNVPVILALIGLWYNNFHGAESESILPYDQYLHRFAAYFQQGNMESNGKCVDRNGNPVDYQTGPIIWGEPGTNGQHAFYQLIHQGTKLIPCDFIAPAISHNQVGDHHQKLMSNFFAQTEALAFGKTEETVKAEFAAAGKTEAEVAELVPFKVFEGNRPTNSILVKQVTPKTLGNLIAMYEHKIFVQGVIWNIFSFDQWGVELGKQLANQILPELADDKAVTSHDSSTNGLINAFKAFQA.

E356 serves as the catalytic Proton donor. Residues H387 and K515 contribute to the active site.

The protein belongs to the GPI family.

The protein resides in the cytoplasm. The enzyme catalyses alpha-D-glucose 6-phosphate = beta-D-fructose 6-phosphate. It functions in the pathway carbohydrate biosynthesis; gluconeogenesis. It participates in carbohydrate degradation; glycolysis; D-glyceraldehyde 3-phosphate and glycerone phosphate from D-glucose: step 2/4. Functionally, catalyzes the reversible isomerization of glucose-6-phosphate to fructose-6-phosphate. This is Glucose-6-phosphate isomerase from Aliivibrio fischeri (strain MJ11) (Vibrio fischeri).